The primary structure comprises 229 residues: Small ribosomal subunit protein uS3 (229 aa).

Residues 17–85 enclose the KH type-2 domain; the sequence is VKEWIKDEVR…NPQVSVDEVE (69 aa). The tract at residues 202–229 is disordered; sequence LRGESGEDEGDKGDEQGGEAQEAEGAGA. The segment covering 219 to 229 has biased composition (low complexity); sequence GEAQEAEGAGA.

It belongs to the universal ribosomal protein uS3 family. Part of the 30S ribosomal subunit.

Its function is as follows. Binds the lower part of the 30S subunit head. This chain is Small ribosomal subunit protein uS3, found in Archaeoglobus fulgidus (strain ATCC 49558 / DSM 4304 / JCM 9628 / NBRC 100126 / VC-16).